We begin with the raw amino-acid sequence, 819 residues long: LPS-assembly protein LptD (819 aa).

An N-terminal signal peptide occupies residues 1–33 (MRQMKYQFKFNPLAAAIFTLLCGGSMQSSYADA).

It belongs to the LptD family. In terms of assembly, component of the lipopolysaccharide transport and assembly complex. Interacts with LptE and LptA.

The protein resides in the cell outer membrane. Functionally, together with LptE, is involved in the assembly of lipopolysaccharide (LPS) at the surface of the outer membrane. In Acinetobacter baylyi (strain ATCC 33305 / BD413 / ADP1), this protein is LPS-assembly protein LptD.